The chain runs to 793 residues: Endonuclease MutS2 (793 aa).

Gly335–Thr342 provides a ligand contact to ATP. In terms of domain architecture, Smr spans Ile718–Arg793.

This sequence belongs to the DNA mismatch repair MutS family. MutS2 subfamily. Homodimer. Binds to stalled ribosomes, contacting rRNA.

Endonuclease that is involved in the suppression of homologous recombination and thus may have a key role in the control of bacterial genetic diversity. Its function is as follows. Acts as a ribosome collision sensor, splitting the ribosome into its 2 subunits. Detects stalled/collided 70S ribosomes which it binds and splits by an ATP-hydrolysis driven conformational change. Acts upstream of the ribosome quality control system (RQC), a ribosome-associated complex that mediates the extraction of incompletely synthesized nascent chains from stalled ribosomes and their subsequent degradation. Probably generates substrates for RQC. This chain is Endonuclease MutS2, found in Acetivibrio thermocellus (strain ATCC 27405 / DSM 1237 / JCM 9322 / NBRC 103400 / NCIMB 10682 / NRRL B-4536 / VPI 7372) (Clostridium thermocellum).